The chain runs to 278 residues: Tryptophan 2,3-dioxygenase (278 aa).

Residues phenylalanine 47–histidine 51, tyrosine 109, and arginine 113 contribute to the substrate site. Histidine 236 lines the heme pocket. A substrate-binding site is contributed by threonine 250.

The protein belongs to the tryptophan 2,3-dioxygenase family. In terms of assembly, homotetramer. Requires heme as cofactor.

The enzyme catalyses L-tryptophan + O2 = N-formyl-L-kynurenine. Its pathway is amino-acid degradation; L-tryptophan degradation via kynurenine pathway; L-kynurenine from L-tryptophan: step 1/2. Its function is as follows. Heme-dependent dioxygenase that catalyzes the oxidative cleavage of the L-tryptophan (L-Trp) pyrrole ring and converts L-tryptophan to N-formyl-L-kynurenine. Catalyzes the oxidative cleavage of the indole moiety. The chain is Tryptophan 2,3-dioxygenase from Ralstonia pickettii (strain 12J).